The following is a 388-amino-acid chain: Na(+)/H(+) antiporter NhaA (388 aa).

The next 12 helical transmembrane spans lie at 13-33, 36-56, 59-79, 95-115, 125-145, 154-174, 179-199, 213-233, 259-279, 287-307, 328-348, and 363-383; these read AAGG…ANTP, GIYH…LEIA, LLLW…GLEV, VFPA…YLMF, GWAI…ALLG, VFLL…IALF, VSMA…FMNW, LVLW…GVII, VAFL…LQGV, LLPV…IFTF, VFAV…IASL, and LGIL…LRMS.

This sequence belongs to the NhaA Na(+)/H(+) (TC 2.A.33) antiporter family.

It is found in the cell inner membrane. It catalyses the reaction Na(+)(in) + 2 H(+)(out) = Na(+)(out) + 2 H(+)(in). Its function is as follows. Na(+)/H(+) antiporter that extrudes sodium in exchange for external protons. This is Na(+)/H(+) antiporter NhaA from Serratia proteamaculans (strain 568).